Here is a 396-residue protein sequence, read N- to C-terminus: Purple acid phosphatase 5 (396 aa).

The first 13 residues, M1–N13, serve as a signal peptide directing secretion. A glycan (N-linked (GlcNAc...) asparagine) is linked at N58. Residue D125 coordinates Fe cation. N-linked (GlcNAc...) asparagine glycosylation is present at N133. Positions 153 and 156 each coordinate Fe cation. D153 contributes to the Zn(2+) binding site. N190 lines the Zn(2+) pocket. A substrate-binding site is contributed by N190. N238 carries N-linked (GlcNAc...) asparagine glycosylation. A Zn(2+)-binding site is contributed by H250. Residue H260 is the Proton donor of the active site. H287 provides a ligand contact to Zn(2+). H287 to H289 contributes to the substrate binding site. H289 is a binding site for Fe cation. N303 and N360 each carry an N-linked (GlcNAc...) asparagine glycan.

Belongs to the metallophosphoesterase superfamily. Purple acid phosphatase family. As to quaternary structure, homodimer. The cofactor is Fe cation. Zn(2+) serves as cofactor.

The protein localises to the secreted. The catalysed reaction is a phosphate monoester + H2O = an alcohol + phosphate. The chain is Purple acid phosphatase 5 (PAP5) from Arabidopsis thaliana (Mouse-ear cress).